The primary structure comprises 97 residues: DNA-binding protein HU (97 aa).

The protein belongs to the bacterial histone-like protein family. As to quaternary structure, has been isolated in complexes with 5S rRNA and bL25, and with 5S rRNA, bL25 and uL5. Homodimer.

Histone-like DNA-binding protein which is capable of wrapping DNA to stabilize it, and thus to prevent its denaturation under extreme environmental conditions. The polypeptide is DNA-binding protein HU (Thermus thermophilus (strain ATCC 27634 / DSM 579 / HB8)).